A 433-amino-acid polypeptide reads, in one-letter code: Signal recognition particle 54 kDa protein (433 aa).

Residues 106 to 113 (GVEGSGKT), 186 to 190 (DTAGR), and 244 to 247 (TKMD) contribute to the GTP site.

Belongs to the GTP-binding SRP family. SRP54 subfamily. As to quaternary structure, part of the signal recognition particle protein translocation system, which is composed of SRP and FtsY. Archaeal SRP consists of a 7S RNA molecule of 300 nucleotides and two protein subunits: SRP54 and SRP19.

The protein localises to the cytoplasm. It catalyses the reaction GTP + H2O = GDP + phosphate + H(+). Involved in targeting and insertion of nascent membrane proteins into the cytoplasmic membrane. Binds to the hydrophobic signal sequence of the ribosome-nascent chain (RNC) as it emerges from the ribosomes. The SRP-RNC complex is then targeted to the cytoplasmic membrane where it interacts with the SRP receptor FtsY. In Pyrobaculum islandicum (strain DSM 4184 / JCM 9189 / GEO3), this protein is Signal recognition particle 54 kDa protein.